Consider the following 117-residue polypeptide: Protein TCL1B2 (117 aa).

It belongs to the TCL1 family.

This is Protein TCL1B2 (Tcl1b2) from Mus musculus (Mouse).